Reading from the N-terminus, the 503-residue chain is Alpha-1,3/1,6-mannosyltransferase ALG2 (503 aa).

N-linked (GlcNAc...) asparagine glycans are attached at residues N59, N173, N262, and N403. A run of 2 helical transmembrane segments spans residues 444–466 (LWST…LITG) and 473–495 (LLLA…WIIV). Residue N500 is glycosylated (N-linked (GlcNAc...) asparagine).

It belongs to the glycosyltransferase group 1 family.

It localises to the endoplasmic reticulum membrane. The catalysed reaction is a beta-D-Man-(1-&gt;4)-beta-D-GlcNAc-(1-&gt;4)-alpha-D-GlcNAc-diphospho-di-trans,poly-cis-dolichol + GDP-alpha-D-mannose = an alpha-D-Man-(1-&gt;3)-beta-D-Man-(1-&gt;4)-beta-D-GlcNAc-(1-&gt;4)-alpha-D-GlcNAc-diphospho-di-trans,poly-cis-dolichol + GDP + H(+). It catalyses the reaction an alpha-D-Man-(1-&gt;3)-beta-D-Man-(1-&gt;4)-beta-D-GlcNAc-(1-&gt;4)-alpha-D-GlcNAc-diphospho-di-trans,poly-cis-dolichol + GDP-alpha-D-mannose = an alpha-D-Man-(1-&gt;3)-[alpha-D-Man-(1-&gt;6)]-beta-D-Man-(1-&gt;4)-beta-D-GlcNAc-(1-&gt;4)-alpha-D-GlcNAc-diphospho-di-trans,poly-cis-dolichol + GDP + H(+). It functions in the pathway protein modification; protein glycosylation. In terms of biological role, mannosylates Man(2)GlcNAc(2)-dolichol diphosphate and Man(1)GlcNAc(2)-dolichol diphosphate to form Man(3)GlcNAc(2)-dolichol diphosphate. The protein is Alpha-1,3/1,6-mannosyltransferase ALG2 (ALG2) of Kluyveromyces lactis (strain ATCC 8585 / CBS 2359 / DSM 70799 / NBRC 1267 / NRRL Y-1140 / WM37) (Yeast).